An 89-amino-acid chain; its full sequence is Small ribosomal subunit protein uS15 (89 aa).

The protein belongs to the universal ribosomal protein uS15 family. As to quaternary structure, part of the 30S ribosomal subunit. Forms a bridge to the 50S subunit in the 70S ribosome, contacting the 23S rRNA.

Its function is as follows. One of the primary rRNA binding proteins, it binds directly to 16S rRNA where it helps nucleate assembly of the platform of the 30S subunit by binding and bridging several RNA helices of the 16S rRNA. Functionally, forms an intersubunit bridge (bridge B4) with the 23S rRNA of the 50S subunit in the ribosome. This is Small ribosomal subunit protein uS15 from Mycobacteroides abscessus (strain ATCC 19977 / DSM 44196 / CCUG 20993 / CIP 104536 / JCM 13569 / NCTC 13031 / TMC 1543 / L948) (Mycobacterium abscessus).